The sequence spans 272 residues: Probable ribonuclease HI_0526 (272 aa).

Positions 1-23 (MKKLTSILSLIVLVILAIWQYFT) are cleaved as a signal peptide. Active-site residues include histidine 148, glutamate 195, and histidine 199.

The protein belongs to the RNase T2 family.

The protein is Probable ribonuclease HI_0526 of Haemophilus influenzae (strain ATCC 51907 / DSM 11121 / KW20 / Rd).